A 547-amino-acid chain; its full sequence is MAELTISSDEIRSAIENYTASYSPEASREEVGVVTDTSDGIAHVSGLPSAMANELLEFPGGILGVALNLDATEIGAVILGDYENIQEGQEVKRTGDVLSVPVGDAFLGRVINPLGQPIDGLGEIASDETRALELQAASVLERQPVEEPLQTGIKAIDAMTPIGRGQRQLVIGDRKTGKTAVCIDAILNQKANWETGDEKQQVRCIYVAIGQKGSTIAGVKAALEEQGAMEYTTIVAAPASDSAGFKWLAPYTGSAIGQHWMYQGKHVLVVFDDLTKQAEAYRAISLLLRRPPGREAYPGDVFYLHSRLLERSAKLSDALGGGSLTALPIIETKANDVSAYIPTNVISITDGQVFLESDLFNKGVRPAINVGISVSRVGGAAQTKGMKKVSGSLRLELAQFRELEAFSAFASDLDAASKAQLERGARLVELLKQDQYSPIPVEDQIVSIYLAGEGVFDSVPVGDVRRFEAELLDELHRTASGVYESIKGGKALDADNAKALVEATDKFKETFLASDGSRVVNEAEAEALDAGEVGHEQINVKRTTVSK.

172–179 (GDRKTGKT) provides a ligand contact to ATP.

It belongs to the ATPase alpha/beta chains family. As to quaternary structure, F-type ATPases have 2 components, CF(1) - the catalytic core - and CF(0) - the membrane proton channel. CF(1) has five subunits: alpha(3), beta(3), gamma(1), delta(1), epsilon(1). CF(0) has three main subunits: a(1), b(2) and c(9-12). The alpha and beta chains form an alternating ring which encloses part of the gamma chain. CF(1) is attached to CF(0) by a central stalk formed by the gamma and epsilon chains, while a peripheral stalk is formed by the delta and b chains.

It localises to the cell membrane. The enzyme catalyses ATP + H2O + 4 H(+)(in) = ADP + phosphate + 5 H(+)(out). Functionally, produces ATP from ADP in the presence of a proton gradient across the membrane. The alpha chain is a regulatory subunit. The protein is ATP synthase subunit alpha of Rhodococcus opacus (strain B4).